A 128-amino-acid polypeptide reads, in one-letter code: Probable 4-amino-4-deoxy-L-arabinose-phosphoundecaprenol flippase subunit ArnF (128 aa).

The Cytoplasmic portion of the chain corresponds to 1–10; that stretch reads MKGYLWGGAS. The chain crosses the membrane as a helical span at residues 11 to 31; sequence VVLVTVAQLVLKWGMMNIPLL. Residues 32 to 47 lie on the Periplasmic side of the membrane; sequence SLADINVQFLTMYFVQ. A helical membrane pass occupies residues 48–68; the sequence is LASVMCGLMGYALSMLCWFFA. The Cytoplasmic portion of the chain corresponds to 69 to 77; the sequence is LRYLPLNRA. A helical transmembrane segment spans residues 78-98; it reads YPLLSLSYALVYLGAVLLPWF. The Periplasmic portion of the chain corresponds to 99-101; the sequence is NEP. The chain crosses the membrane as a helical span at residues 102–122; sequence ATLLKTLGAGFILLGIWLINI. At 123-128 the chain is on the cytoplasmic side; the sequence is KPIKAS.

Belongs to the ArnF family. In terms of assembly, heterodimer of ArnE and ArnF.

It localises to the cell inner membrane. It participates in bacterial outer membrane biogenesis; lipopolysaccharide biosynthesis. In terms of biological role, translocates 4-amino-4-deoxy-L-arabinose-phosphoundecaprenol (alpha-L-Ara4N-phosphoundecaprenol) from the cytoplasmic to the periplasmic side of the inner membrane. The polypeptide is Probable 4-amino-4-deoxy-L-arabinose-phosphoundecaprenol flippase subunit ArnF (Yersinia pseudotuberculosis serotype O:1b (strain IP 31758)).